Reading from the N-terminus, the 1600-residue chain is A disintegrin and metalloproteinase with thrombospondin motifs 12 (1600 aa).

An N-terminal signal peptide occupies residues 1–25 (MPCARGSWLAKLSIVAQLINFGAFC). The propeptide occupies 26-244 (HGRQTQPWPV…TLRSRSLSRR (219 aa)). N-linked (GlcNAc...) asparagine glycosylation occurs at Asn105. The Cysteine switch signature appears at 210–217 (PICGLKDS). Cys212 is a binding site for Zn(2+). The 211-residue stretch at 250–460 (RWVETLVVAD…GRGFCLDDIP (211 aa)) folds into the Peptidase M12B domain. 11 disulfide bridges follow: Cys326-Cys380, Cys355-Cys362, Cys374-Cys455, Cys413-Cys439, Cys482-Cys505, Cys493-Cys511, Cys500-Cys530, Cys524-Cys535, Cys558-Cys595, Cys562-Cys600, and Cys573-Cys585. His396 provides a ligand contact to Zn(2+). The active site involves Glu397. Zn(2+)-binding residues include His400 and His406. The region spanning 469–548 (VIAPGVIYDV…GKKPESIPGG (80 aa)) is the Disintegrin domain. TSP type-1 domains lie at 546–601 (PGGW…HPCR), 827–887 (KLLY…KDCP), 891–947 (WAGE…RDIL), and 948–1001 (CPSD…QQCP). The segment at 705–831 (CQTVKKLFRQ…DNDVEKLLYF (127 aa)) is spacer 1. The interval 1001 to 1321 (PFSRRVLKPN…HLMKDHSPAY (321 aa)) is spacer 2. 2 disordered regions span residues 1006–1140 (VLKP…LSSS) and 1158–1179 (PEVE…KDKS). Positions 1038–1047 (PTPLSTPTVP) are enriched in low complexity. Over residues 1048-1107 (ESMSTSTPTINSLGSTIASQEDANGMGWQNNSTQAEEGSHFPTSSGSTSQVPVTSWSLSI) the composition is skewed to polar residues. Residues 1130-1140 (TTTSDSGLSSS) are compositionally biased toward low complexity. 4 TSP type-1 domains span residues 1318–1371 (SPAY…RPCA), 1373–1428 (WRVG…CNLE), 1429–1477 (PCGE…NRHL), and 1478–1538 (CCHW…QACR). Residues 1541–1581 (ADLTCLKDRLSISFCQTLKSMRKCSVPSVRAQCCLSCPQAP) form the PLAC domain.

In terms of assembly, interacts with COMP. Requires Zn(2+) as cofactor. Post-translationally, the precursor is cleaved by a furin endopeptidase. Subjected to an intracellular maturation process yielding a 120 kDa N-terminal fragment containing the metalloproteinase, disintegrin, one TSP type-1 and the Cys-rich domains and a 83 kDa C-terminal fragment containing the spacer 2 and four TSP type-1 domains. In terms of processing, glycosylated. Can be O-fucosylated by POFUT2 on a serine or a threonine residue found within the consensus sequence C1-X(2)-(S/T)-C2-G of the TSP type-1 repeat domains where C1 and C2 are the first and second cysteine residue of the repeat, respectively. Fucosylated repeats can then be further glycosylated by the addition of a beta-1,3-glucose residue by the glucosyltransferase, B3GALTL. Fucosylation mediates the efficient secretion of ADAMTS family members. Can also be C-glycosylated with one or two mannose molecules on tryptophan residues within the consensus sequence W-X-X-W of the TPRs, and N-glycosylated. These other glycosylations can also facilitate secretion.

The protein localises to the secreted. Its subcellular location is the extracellular space. The protein resides in the extracellular matrix. Its activity is regulated as follows. Inhibited by alpha-2 macroglobulin. Functionally, metalloprotease that plays a role in the degradation of COMP. Also cleaves alpha-2 macroglobulin and aggregan. Has anti-tumorigenic properties. This chain is A disintegrin and metalloproteinase with thrombospondin motifs 12 (Adamts12), found in Mus musculus (Mouse).